The following is a 302-amino-acid chain: tRNA pseudouridine synthase B (302 aa).

The active-site Nucleophile is aspartate 45.

This sequence belongs to the pseudouridine synthase TruB family. Type 1 subfamily.

It carries out the reaction uridine(55) in tRNA = pseudouridine(55) in tRNA. In terms of biological role, responsible for synthesis of pseudouridine from uracil-55 in the psi GC loop of transfer RNAs. This is tRNA pseudouridine synthase B from Francisella tularensis subsp. tularensis (strain FSC 198).